Consider the following 304-residue polypeptide: N-acetylmuramic acid 6-phosphate etherase 1 (304 aa).

Residues 1 to 10 are compositionally biased toward polar residues; it reads MENSHLGSLT. Residues 1 to 20 are disordered; the sequence is MENSHLGSLTTERRNERSKR. Residues 58-221 form the SIS domain; sequence AVGSLKKGGR…STAAMIKMGK (164 aa). Glu86 (proton donor) is an active-site residue. Glu117 is a catalytic residue.

The protein belongs to the GCKR-like family. MurNAc-6-P etherase subfamily. In terms of assembly, homodimer.

It carries out the reaction N-acetyl-D-muramate 6-phosphate + H2O = N-acetyl-D-glucosamine 6-phosphate + (R)-lactate. It participates in amino-sugar metabolism; N-acetylmuramate degradation. Specifically catalyzes the cleavage of the D-lactyl ether substituent of MurNAc 6-phosphate, producing GlcNAc 6-phosphate and D-lactate. This is N-acetylmuramic acid 6-phosphate etherase 1 from Bacillus licheniformis (strain ATCC 14580 / DSM 13 / JCM 2505 / CCUG 7422 / NBRC 12200 / NCIMB 9375 / NCTC 10341 / NRRL NRS-1264 / Gibson 46).